The following is a 504-amino-acid chain: Maturase K (504 aa).

Belongs to the intron maturase 2 family. MatK subfamily.

Its subcellular location is the plastid. The protein localises to the chloroplast. Functionally, usually encoded in the trnK tRNA gene intron. Probably assists in splicing its own and other chloroplast group II introns. In Fagus crenata (Japanese beech), this protein is Maturase K.